Reading from the N-terminus, the 284-residue chain is Avenin-like b10 (284 aa).

The signal sequence occupies residues 1–18 (MKVFILALLALAATTAIA).

Belongs to the prolamin family. Post-translationally, contains disulfide bonds.

Functionally, seed storage protein. Might be integrated via inter-chain disulfide bonds within the glutenin polymer. This chain is Avenin-like b10, found in Triticum aestivum (Wheat).